The primary structure comprises 454 residues: UDP-N-acetylmuramoylalanine--D-glutamate ligase (454 aa).

118–124 contacts ATP; sequence GTNGKTT.

This sequence belongs to the MurCDEF family.

It localises to the cytoplasm. The enzyme catalyses UDP-N-acetyl-alpha-D-muramoyl-L-alanine + D-glutamate + ATP = UDP-N-acetyl-alpha-D-muramoyl-L-alanyl-D-glutamate + ADP + phosphate + H(+). The protein operates within cell wall biogenesis; peptidoglycan biosynthesis. Cell wall formation. Catalyzes the addition of glutamate to the nucleotide precursor UDP-N-acetylmuramoyl-L-alanine (UMA). This Thermosynechococcus vestitus (strain NIES-2133 / IAM M-273 / BP-1) protein is UDP-N-acetylmuramoylalanine--D-glutamate ligase.